A 157-amino-acid polypeptide reads, in one-letter code: Transcriptional repressor NrdR (157 aa).

A zinc finger spans residues 3 to 34 (CPFCRHPDSRVVDSRTSDDGLSIRRRRQCPEC). Residues 46 to 136 (LSVIKRNGVV…VYQGFDSLDD (91 aa)) form the ATP-cone domain.

This sequence belongs to the NrdR family. Zn(2+) is required as a cofactor.

Negatively regulates transcription of bacterial ribonucleotide reductase nrd genes and operons by binding to NrdR-boxes. This Clavibacter sepedonicus (Clavibacter michiganensis subsp. sepedonicus) protein is Transcriptional repressor NrdR.